Reading from the N-terminus, the 571-residue chain is Proline--tRNA ligase (571 aa).

Belongs to the class-II aminoacyl-tRNA synthetase family. ProS type 1 subfamily. In terms of assembly, homodimer.

The protein localises to the cytoplasm. It carries out the reaction tRNA(Pro) + L-proline + ATP = L-prolyl-tRNA(Pro) + AMP + diphosphate. Its function is as follows. Catalyzes the attachment of proline to tRNA(Pro) in a two-step reaction: proline is first activated by ATP to form Pro-AMP and then transferred to the acceptor end of tRNA(Pro). As ProRS can inadvertently accommodate and process non-cognate amino acids such as alanine and cysteine, to avoid such errors it has two additional distinct editing activities against alanine. One activity is designated as 'pretransfer' editing and involves the tRNA(Pro)-independent hydrolysis of activated Ala-AMP. The other activity is designated 'posttransfer' editing and involves deacylation of mischarged Ala-tRNA(Pro). The misacylated Cys-tRNA(Pro) is not edited by ProRS. This is Proline--tRNA ligase from Vibrio parahaemolyticus serotype O3:K6 (strain RIMD 2210633).